A 167-amino-acid chain; its full sequence is Large ribosomal subunit protein uL10 (167 aa).

The protein belongs to the universal ribosomal protein uL10 family. Part of the ribosomal stalk of the 50S ribosomal subunit. The N-terminus interacts with L11 and the large rRNA to form the base of the stalk. The C-terminus forms an elongated spine to which L12 dimers bind in a sequential fashion forming a multimeric L10(L12)X complex.

Forms part of the ribosomal stalk, playing a central role in the interaction of the ribosome with GTP-bound translation factors. This chain is Large ribosomal subunit protein uL10, found in Erwinia tasmaniensis (strain DSM 17950 / CFBP 7177 / CIP 109463 / NCPPB 4357 / Et1/99).